A 534-amino-acid chain; its full sequence is Bifunctional purine biosynthesis protein PurH (534 aa).

Residues 1–148 (MNTVRPIRRA…KNHQDVTIVV (148 aa)) enclose the MGS-like domain.

It belongs to the PurH family.

The catalysed reaction is (6R)-10-formyltetrahydrofolate + 5-amino-1-(5-phospho-beta-D-ribosyl)imidazole-4-carboxamide = 5-formamido-1-(5-phospho-D-ribosyl)imidazole-4-carboxamide + (6S)-5,6,7,8-tetrahydrofolate. It catalyses the reaction IMP + H2O = 5-formamido-1-(5-phospho-D-ribosyl)imidazole-4-carboxamide. Its pathway is purine metabolism; IMP biosynthesis via de novo pathway; 5-formamido-1-(5-phospho-D-ribosyl)imidazole-4-carboxamide from 5-amino-1-(5-phospho-D-ribosyl)imidazole-4-carboxamide (10-formyl THF route): step 1/1. It participates in purine metabolism; IMP biosynthesis via de novo pathway; IMP from 5-formamido-1-(5-phospho-D-ribosyl)imidazole-4-carboxamide: step 1/1. In Shewanella denitrificans (strain OS217 / ATCC BAA-1090 / DSM 15013), this protein is Bifunctional purine biosynthesis protein PurH.